Here is a 473-residue protein sequence, read N- to C-terminus: Photosystem II CP43 reaction center protein (473 aa).

Residues 1-14 (MKTLYSLRRFYPVE) constitute a propeptide that is removed on maturation. Position 15 is an N-acetylthreonine (Thr-15). Thr-15 carries the phosphothreonine modification. Helical transmembrane passes span 69–93 (LFEV…PHLA), 134–155 (LIGP…KDRS), 178–200 (KALY…RKIT), 255–275 (KPFA…LSYS), and 291–312 (WFNN…ASQA). Glu-367 serves as a coordination point for [CaMn4O5] cluster. A helical transmembrane segment spans residues 447-471 (RARAAAAGFEKGIDRDFEPVLSMNP).

Belongs to the PsbB/PsbC family. PsbC subfamily. As to quaternary structure, PSII is composed of 1 copy each of membrane proteins PsbA, PsbB, PsbC, PsbD, PsbE, PsbF, PsbH, PsbI, PsbJ, PsbK, PsbL, PsbM, PsbT, PsbX, PsbY, PsbZ, Psb30/Ycf12, at least 3 peripheral proteins of the oxygen-evolving complex and a large number of cofactors. It forms dimeric complexes. Requires Binds multiple chlorophylls and provides some of the ligands for the Ca-4Mn-5O cluster of the oxygen-evolving complex. It may also provide a ligand for a Cl- that is required for oxygen evolution. PSII binds additional chlorophylls, carotenoids and specific lipids. as cofactor.

It is found in the plastid. It localises to the chloroplast thylakoid membrane. Functionally, one of the components of the core complex of photosystem II (PSII). It binds chlorophyll and helps catalyze the primary light-induced photochemical processes of PSII. PSII is a light-driven water:plastoquinone oxidoreductase, using light energy to abstract electrons from H(2)O, generating O(2) and a proton gradient subsequently used for ATP formation. This Cycas taitungensis (Prince sago) protein is Photosystem II CP43 reaction center protein.